A 108-amino-acid polypeptide reads, in one-letter code: MLTGYRLMWMVVMFDLPVITKAERKAATGFRNALLDVGFQMSQFSVYLRFCTSQAQVDTLCRQVEQALPAGGKVHIFQFTDKQYERAISFHGRSRQPAQKAPDQFDLF.

Asp-15 lines the Mg(2+) pocket.

It belongs to the CRISPR-associated endoribonuclease Cas2 protein family. As to quaternary structure, homodimer, forms a heterotetramer with a Cas1 homodimer. It depends on Mg(2+) as a cofactor.

In terms of biological role, CRISPR (clustered regularly interspaced short palindromic repeat), is an adaptive immune system that provides protection against mobile genetic elements (viruses, transposable elements and conjugative plasmids). CRISPR clusters contain sequences complementary to antecedent mobile elements and target invading nucleic acids. CRISPR clusters are transcribed and processed into CRISPR RNA (crRNA). Functions as a ssRNA-specific endoribonuclease. Involved in the integration of spacer DNA into the CRISPR cassette. This is CRISPR-associated endoribonuclease Cas2 from Paracidovorax avenae (strain ATCC 19860 / DSM 7227 / CCUG 15838 / JCM 20985 / LMG 2117 / NCPPB 1011) (Acidovorax avenae).